Consider the following 198-residue polypeptide: 7-methyl-GTP pyrophosphatase (198 aa).

Asp-69 acts as the Proton acceptor in catalysis.

Belongs to the Maf family. YceF subfamily. It depends on a divalent metal cation as a cofactor.

It localises to the cytoplasm. It catalyses the reaction N(7)-methyl-GTP + H2O = N(7)-methyl-GMP + diphosphate + H(+). Functionally, nucleoside triphosphate pyrophosphatase that hydrolyzes 7-methyl-GTP (m(7)GTP). May have a dual role in cell division arrest and in preventing the incorporation of modified nucleotides into cellular nucleic acids. In Yersinia pseudotuberculosis serotype I (strain IP32953), this protein is 7-methyl-GTP pyrophosphatase.